Consider the following 554-residue polypeptide: Protein translocase subunit SecD (554 aa).

Helical transmembrane passes span 10 to 30 (LVILGLCLAALITAAPNMFYA), 392 to 412 (AGMVASVIGFVAVVAYMIASY), 414 to 434 (LFGFFSSVALFINIAFIFAVM), 435 to 455 (GAIGGTMTLPGIAGIVLTIGT), 491 to 511 (AIIDANVTSFLSSAILFVLGA), and 516 to 536 (GFAVTTMIGIAASIFTAIWVV).

It belongs to the SecD/SecF family. SecD subfamily. As to quaternary structure, forms a complex with SecF. Part of the essential Sec protein translocation apparatus which comprises SecA, SecYEG and auxiliary proteins SecDF-YajC and YidC.

The protein localises to the cell inner membrane. Part of the Sec protein translocase complex. Interacts with the SecYEG preprotein conducting channel. SecDF uses the proton motive force (PMF) to complete protein translocation after the ATP-dependent function of SecA. The polypeptide is Protein translocase subunit SecD (Rhodobacter capsulatus (strain ATCC BAA-309 / NBRC 16581 / SB1003)).